A 125-amino-acid chain; its full sequence is Large ribosomal subunit protein eL31 (125 aa).

Methionine 1 bears the N-acetylmethionine mark. Serine 15 carries the post-translational modification Phosphoserine. An N6-succinyllysine mark is found at lysine 55 and lysine 70. Residue lysine 75 is modified to N6-acetyllysine; alternate. Residue lysine 75 is modified to N6-succinyllysine; alternate. Serine 98 is subject to Phosphoserine.

This sequence belongs to the eukaryotic ribosomal protein eL31 family. Component of the large ribosomal subunit.

It is found in the cytoplasm. In terms of biological role, component of the large ribosomal subunit. The ribosome is a large ribonucleoprotein complex responsible for the synthesis of proteins in the cell. This is Large ribosomal subunit protein eL31 (RPL31) from Pongo abelii (Sumatran orangutan).